Here is a 246-residue protein sequence, read N- to C-terminus: 3-deoxy-manno-octulosonate cytidylyltransferase (246 aa).

It belongs to the KdsB family.

The protein localises to the cytoplasm. The enzyme catalyses 3-deoxy-alpha-D-manno-oct-2-ulosonate + CTP = CMP-3-deoxy-beta-D-manno-octulosonate + diphosphate. It participates in nucleotide-sugar biosynthesis; CMP-3-deoxy-D-manno-octulosonate biosynthesis; CMP-3-deoxy-D-manno-octulosonate from 3-deoxy-D-manno-octulosonate and CTP: step 1/1. Its pathway is bacterial outer membrane biogenesis; lipopolysaccharide biosynthesis. In terms of biological role, activates KDO (a required 8-carbon sugar) for incorporation into bacterial lipopolysaccharide in Gram-negative bacteria. This is 3-deoxy-manno-octulosonate cytidylyltransferase from Chloroherpeton thalassium (strain ATCC 35110 / GB-78).